We begin with the raw amino-acid sequence, 287 residues long: Small ribosomal subunit protein uS2 (287 aa).

The disordered stretch occupies residues 235–287; that stretch reads ESGFATGGGDWEATAPAAASGWDDAAAQPQNWDSAAQGAASWDEAAAPKEGQW. Residues 247-261 are compositionally biased toward low complexity; the sequence is ATAPAAASGWDDAAA.

It belongs to the universal ribosomal protein uS2 family. In terms of assembly, component of the small ribosomal subunit. Mature ribosomes consist of a small (40S) and a large (60S) subunit. The 40S subunit contains about 33 different proteins and 1 molecule of RNA (18S). The 60S subunit contains about 49 different proteins and 3 molecules of RNA (25S, 5.8S and 5S). Interacts with RPS21.

The protein resides in the cytoplasm. In terms of biological role, required for the assembly and/or stability of the 40S ribosomal subunit. Required for the processing of the 20S rRNA-precursor to mature 18S rRNA in a late step of the maturation of 40S ribosomal subunits. The protein is Small ribosomal subunit protein uS2 of Pyricularia oryzae (strain 70-15 / ATCC MYA-4617 / FGSC 8958) (Rice blast fungus).